A 247-amino-acid polypeptide reads, in one-letter code: Triosephosphate isomerase (247 aa).

Substrate is bound by residues N10 and K12. The active-site Electrophile is H94. E164 acts as the Proton acceptor in catalysis.

The protein belongs to the triosephosphate isomerase family. As to quaternary structure, homodimer.

The catalysed reaction is D-glyceraldehyde 3-phosphate = dihydroxyacetone phosphate. The protein operates within carbohydrate biosynthesis; gluconeogenesis. It participates in carbohydrate degradation; glycolysis; D-glyceraldehyde 3-phosphate from glycerone phosphate: step 1/1. In Culex tarsalis (Encephalitis mosquito), this protein is Triosephosphate isomerase (Tpi).